Reading from the N-terminus, the 661-residue chain is UvrABC system protein B (661 aa).

Residues 25–182 (AGLNSKKRSQ…NDLINLQYKR (158 aa)) enclose the Helicase ATP-binding domain. 38 to 45 (GITGSGKT) contacts ATP. The Beta-hairpin signature appears at 91–114 (YYDYYQPEAYIARTDTFIEKDSSI). The Helicase C-terminal domain occupies 430 to 592 (QVEDLISEIQ…IIPKTINRAI (163 aa)). Positions 621–656 (KANINKLNKEMLKAASNLEFEQAAKLRDQLKTLEAA) constitute a UVR domain.

This sequence belongs to the UvrB family. Forms a heterotetramer with UvrA during the search for lesions. Interacts with UvrC in an incision complex.

The protein resides in the cytoplasm. The UvrABC repair system catalyzes the recognition and processing of DNA lesions. A damage recognition complex composed of 2 UvrA and 2 UvrB subunits scans DNA for abnormalities. Upon binding of the UvrA(2)B(2) complex to a putative damaged site, the DNA wraps around one UvrB monomer. DNA wrap is dependent on ATP binding by UvrB and probably causes local melting of the DNA helix, facilitating insertion of UvrB beta-hairpin between the DNA strands. Then UvrB probes one DNA strand for the presence of a lesion. If a lesion is found the UvrA subunits dissociate and the UvrB-DNA preincision complex is formed. This complex is subsequently bound by UvrC and the second UvrB is released. If no lesion is found, the DNA wraps around the other UvrB subunit that will check the other stand for damage. The protein is UvrABC system protein B of Rickettsia akari (strain Hartford).